Consider the following 45-residue polypeptide: Lysis protein for colicin E1 (45 aa).

Positions 1 to 17 (MRKRFFVGIFAINLLVG) are cleaved as a signal peptide. A lipid anchor (N-palmitoyl cysteine) is attached at C18. C18 carries S-diacylglycerol cysteine lipidation.

It localises to the cell outer membrane. Functionally, lysis proteins are required for both colicin release and partial cell lysis. This is Lysis protein for colicin E1 (lys) from Escherichia coli.